Here is a 219-residue protein sequence, read N- to C-terminus: Proteasome subunit beta type-9 (219 aa).

A propeptide spans 1–20 (removed in mature form); that stretch reads MLRAGAPTAGSFRTEEVHTG. The active-site Nucleophile is Thr21. Residues Lys53 and Lys109 each carry the N6-acetyllysine modification.

It belongs to the peptidase T1B family. In terms of assembly, the 26S proteasome consists of a 20S proteasome core and two 19S regulatory subunits. The 20S proteasome core is composed of 28 subunits that are arranged in four stacked rings, resulting in a barrel-shaped structure. The two end rings are each formed by seven alpha subunits, and the two central rings are each formed by seven beta subunits. The catalytic chamber with the active sites is on the inside of the barrel. Component of the immunoproteasome, where it displaces the equivalent housekeeping subunit PSMB6. Component of the spermatoproteasome, a form of the proteasome specifically found in testis. Autocleaved. The resulting N-terminal Thr residue of the mature subunit is responsible for the nucleophile proteolytic activity.

Its subcellular location is the cytoplasm. It localises to the nucleus. It carries out the reaction Cleavage of peptide bonds with very broad specificity.. Functionally, the proteasome is a multicatalytic proteinase complex which is characterized by its ability to cleave peptides with Arg, Phe, Tyr, Leu, and Glu adjacent to the leaving group at neutral or slightly basic pH. The proteasome has an ATP-dependent proteolytic activity. This subunit is involved in antigen processing to generate class I binding peptides. This chain is Proteasome subunit beta type-9 (Psmb9), found in Mus spicilegus (Steppe mouse).